The primary structure comprises 440 residues: UDP-glycosyltransferase 87A1 (440 aa).

UDP-alpha-D-glucose-binding positions include Ser-263, 312-314 (CDQ), 329-337 (HCGYNSTLE), and 351-354 (FWDQ).

This sequence belongs to the UDP-glycosyltransferase family.

This Arabidopsis thaliana (Mouse-ear cress) protein is UDP-glycosyltransferase 87A1 (UGT87A1).